Reading from the N-terminus, the 120-residue chain is MTSKKELLKETMRHRLEQKHCKFLSDALGETHPSVEQQRIRAACVAFDLERLATLSTARALLDVSTRRASDAQKRTALTKGLLDGDTFYESNDALIEINDRVAELKDNVLDAARSVSEDP.

This sequence belongs to the herpesviridae UL96 family.

The protein is Protein GP96 of Cavia porcellus (Guinea pig).